The chain runs to 103 residues: MAQFDNVSVKKKANVYFDGKCVSHTVLFPNGTRATVGVIFPGALTFNTGSPELMEINSGACKVRLSGESDWKAYGAGEKFTVPGNSSFDIEVTETLDYVCHFE.

The protein belongs to the nucleoside phosphorylase PpnP family.

It carries out the reaction a purine D-ribonucleoside + phosphate = a purine nucleobase + alpha-D-ribose 1-phosphate. It catalyses the reaction adenosine + phosphate = alpha-D-ribose 1-phosphate + adenine. The enzyme catalyses cytidine + phosphate = cytosine + alpha-D-ribose 1-phosphate. The catalysed reaction is guanosine + phosphate = alpha-D-ribose 1-phosphate + guanine. It carries out the reaction inosine + phosphate = alpha-D-ribose 1-phosphate + hypoxanthine. It catalyses the reaction thymidine + phosphate = 2-deoxy-alpha-D-ribose 1-phosphate + thymine. The enzyme catalyses uridine + phosphate = alpha-D-ribose 1-phosphate + uracil. The catalysed reaction is xanthosine + phosphate = alpha-D-ribose 1-phosphate + xanthine. Functionally, catalyzes the phosphorolysis of diverse nucleosides, yielding D-ribose 1-phosphate and the respective free bases. Can use uridine, adenosine, guanosine, cytidine, thymidine, inosine and xanthosine as substrates. Also catalyzes the reverse reactions. The polypeptide is Pyrimidine/purine nucleoside phosphorylase (Methylobacillus flagellatus (strain ATCC 51484 / DSM 6875 / VKM B-1610 / KT)).